A 387-amino-acid chain; its full sequence is 3-ketoacyl-CoA thiolase (387 aa).

Cys-91 acts as the Acyl-thioester intermediate in catalysis. Residues His-343 and Cys-373 each act as proton acceptor in the active site.

Belongs to the thiolase-like superfamily. Thiolase family. Heterotetramer of two alpha chains (FadB) and two beta chains (FadA).

It is found in the cytoplasm. It carries out the reaction an acyl-CoA + acetyl-CoA = a 3-oxoacyl-CoA + CoA. Its pathway is lipid metabolism; fatty acid beta-oxidation. Catalyzes the final step of fatty acid oxidation in which acetyl-CoA is released and the CoA ester of a fatty acid two carbons shorter is formed. The chain is 3-ketoacyl-CoA thiolase from Aeromonas hydrophila subsp. hydrophila (strain ATCC 7966 / DSM 30187 / BCRC 13018 / CCUG 14551 / JCM 1027 / KCTC 2358 / NCIMB 9240 / NCTC 8049).